The sequence spans 183 residues: MTTASTSQVRQNYHQDSEAAINRQINLELYASYVYLSMSYYFDRDDVALKNFAKYFLHQSHEEREHAEKLMKLQNQRGGRIFLQDIKKPDCDDWESGLNAMECALHLEKNVNQSLLELHKLATDKNDPHLCDFLETHYLNEQVKAIKELGDHVTNLRKMGAPESGLAEYLFDKHTLGDSDNES.

Met1 bears the N-acetylmethionine mark. At Thr2 the chain carries N-acetylthreonine; in Ferritin heavy chain, N-terminally processed. One can recognise a Ferritin-like diiron domain in the interval 11–160 (QNYHQDSEAA…DHVTNLRKMG (150 aa)). Fe cation is bound by residues Glu28, Glu63, His66, Glu108, and Gln142. A phosphoserine mark is found at Ser179 and Ser183.

It belongs to the ferritin family. As to quaternary structure, oligomer of 24 subunits. There are two types of subunits: L (light) chain and H (heavy) chain. The major chain can be light or heavy, depending on the species and tissue type. The functional molecule forms a roughly spherical shell with a diameter of 12 nm and contains a central cavity into which the insoluble mineral iron core is deposited. Interacts with NCOA4; NCOA4 promotes targeting of the iron-binding ferritin complex to autolysosomes following starvation or iron depletion.

It is found in the cytoplasm. Its subcellular location is the lysosome. The protein resides in the cytoplasmic vesicle. The protein localises to the autophagosome. The catalysed reaction is 4 Fe(2+) + O2 + 4 H(+) = 4 Fe(3+) + 2 H2O. Functionally, stores iron in a soluble, non-toxic, readily available form. Important for iron homeostasis. Has ferroxidase activity. Iron is taken up in the ferrous form and deposited as ferric hydroxides after oxidation. Also plays a role in delivery of iron to cells. Mediates iron uptake in capsule cells of the developing kidney. Delivery to lysosomes is mediated by the cargo receptor NCOA4 for autophagic degradation and release of iron. The polypeptide is Ferritin heavy chain (FTH1) (Pongo abelii (Sumatran orangutan)).